Reading from the N-terminus, the 369-residue chain is Maltose/maltodextrin import ATP-binding protein MalK (369 aa).

Positions 4–234 (VTLRNVCKSY…PKNRFVAGFI (231 aa)) constitute an ABC transporter domain. 36–43 (GPSGCGKS) is an ATP binding site.

Belongs to the ABC transporter superfamily. Maltooligosaccharide importer (TC 3.A.1.1.1) family. In terms of assembly, the complex is composed of two ATP-binding proteins (MalK), two transmembrane proteins (MalG and MalK) and a solute-binding protein (MalE).

It localises to the cell inner membrane. The enzyme catalyses D-maltose(out) + ATP + H2O = D-maltose(in) + ADP + phosphate + H(+). In terms of biological role, part of the ABC transporter complex MalEFGK involved in maltose/maltodextrin import. Responsible for energy coupling to the transport system. This chain is Maltose/maltodextrin import ATP-binding protein MalK, found in Aliivibrio fischeri (strain ATCC 700601 / ES114) (Vibrio fischeri).